The primary structure comprises 850 residues: Protein stoned-A (850 aa).

The segment covering 1–16 (MLKLPKGLKKKKKKSK) has biased composition (basic residues). Disordered regions lie at residues 1 to 95 (MLKL…AAGG) and 125 to 164 (KESF…LGQI). An interaction with Syt region spans residues 26-290 (ELEQYKRDLK…QNLLLSESIE (265 aa)). A compositionally biased stretch (basic and acidic residues) spans 28-38 (EQYKRDLKAKQ). Positions 78 to 91 (ILNAQQQLSDQNQG) are enriched in polar residues. The segment covering 136 to 164 (AEKKKQKEEEAARLEAEQQEREKQRLGQI) has biased composition (basic and acidic residues). The DPF 1 motif lies at 224–226 (DPF). Disordered stretches follow at residues 345–375 (EEEE…EEDD) and 412–498 (GSWA…PPFL). A compositionally biased stretch (pro residues) spans 431 to 440 (PPPPVRPPTG). The segment covering 451–462 (SEDEEENPEDDP) has biased composition (acidic residues). Short sequence motifs (DPF) lie at residues 461–463 (DPF) and 535–537 (DPF). Disordered stretches follow at residues 573 to 610 (HSLS…QRKS), 634 to 673 (GNEL…TSHV), 738 to 760 (RKKL…FDTS), and 800 to 825 (LGLG…IDPF). 2 stretches are compositionally biased toward basic and acidic residues: residues 574 to 588 (SLSD…DQKE) and 596 to 607 (LEQKETDFDTAQ). 3 short sequence motifs (DPF) span residues 666–668 (DPF), 755–757 (DPF), and 823–825 (DPF).

In terms of assembly, interacts with the second C2 domain of Syt.

It localises to the cytoplasm. The protein localises to the synapse. It is found in the cytoplasmic vesicle. Its subcellular location is the secretory vesicle. The protein resides in the synaptic vesicle. Its function is as follows. Adapter protein involved in endocytic recycling of synaptic vesicles membranes. May act by mediating the retrieval of synaptotagmin protein Syt from the plasma membrane, thereby facilitating the internalization of multiple synaptic vesicles from the plasma membrane. This is Protein stoned-A (stnA) from Drosophila melanogaster (Fruit fly).